The primary structure comprises 129 residues: Putative zinc finger protein 702 (129 aa).

3 C2H2-type zinc fingers span residues 34 to 56 (YKCD…HRCH), 62 to 84 (YKCN…KAIH), and 90 to 112 (HKCN…HRLH).

The protein belongs to the krueppel C2H2-type zinc-finger protein family.

It is found in the nucleus. Functionally, may be involved in transcriptional regulation. The polypeptide is Putative zinc finger protein 702 (ZNF702P) (Homo sapiens (Human)).